The sequence spans 753 residues: MVSVGSKSLPSRRHRTIEEDSLMGERGKSSNNHSERNKGMRRKDHKGNRGFDVDSSKKNQSGGAPNVKPASKKHSEFEHQNQFVRKEIDPETSKYFSEIANLFDSNEVELEERSVICGNALEETRGREYEIATDYIISHVLQTLLEGCELDQLCSFIRNSASVFPAIAMDRSGSHVAESALKSLATHLENPDAYSVIEEALHSICKVIVDNPLDMMCNCYGSHVLRRLLCLCKGVSLDSPELYGAKSSKALAKRLNLKMSQLDDNNLEIPHQGFPGMLTYLLSGLLSCSREDMKYLQVDQYSSLVLQTALRLMLKQDEQLLEIIPLILRCNSTNKKVEGFHIETNVAKEILESMKDNSFSHLVEVILEVAPESLYNEMFNKVFKNSLFELSVDRCANFVIQALISHARDQEQMGIMWEELAPRFKDLLEQGKSGVVASLIAVSQRLQSHENKCCEALVGAVCSTNESRISILPRLLFLDYYFGCRDKSTWEWAPGAKMHVMGCLILQGIFKFSSDHIQPYITSLTSMKAEYITETAKDSSGARVIEAFLASDAATKQKRRLIIKLRGHFGELSLHTSGSFTVEKCFDACNLTLREAIASELLDVKVDLSKTKQGPYLLRKLDIDGYASRPDQWKSRQEAKQSTYNEFCSAFGSNKSNFPKNTFVSDASEDAAQEIEVKNTRKEIDHHPTSGFKRHREKHAKDKDEPFAGEKRSKQKKNKTSEATDKPKLAGSKRPFLSGEMTGKNRHSNKMRI.

The disordered stretch occupies residues 1–84 (MVSVGSKSLP…SEFEHQNQFV (84 aa)). 3 stretches are compositionally biased toward basic and acidic residues: residues 23–38 (MGER…ERNK), 47–57 (GNRGFDVDSSK), and 73–84 (KHSEFEHQNQFV). 8 Pumilio repeats span residues 123-158 (ETRG…SFIR), 159-198 (NSAS…SVIE), 206-244 (KVIV…ELYG), 284-325 (GLLS…EIIP), 345-380 (NVAK…EMFN), 381-418 (KVFK…IMWE), 526-563 (SMKA…RLII), and 564-599 (KLRG…AIAS). Residues 322-675 (EIIPLILRCN…DASEDAAQEI (354 aa)) form the PUM-HD domain. Composition is skewed to basic and acidic residues over residues 677 to 688 (VKNTRKEIDHHP), 699 to 712 (HAKD…GEKR), and 719 to 728 (KTSEATDKPK). The tract at residues 677-753 (VKNTRKEIDH…KNRHSNKMRI (77 aa)) is disordered. Positions 744-753 (KNRHSNKMRI) are enriched in basic residues.

It is found in the nucleus. The protein localises to the nucleolus. Its function is as follows. Sequence-specific RNA-binding protein that regulates translation and mRNA stability by binding the 3'-UTR of target mRNAs. This Arabidopsis thaliana (Mouse-ear cress) protein is Pumilio homolog 23 (APUM23).